We begin with the raw amino-acid sequence, 296 residues long: MHFQDIISTLQRFWADQGCLLLQPYDTEKGAGTMSPHTVLRAIGPEPWAVAYPEPCRRPTDGRYGDNPNRAQHYFQFQVLIKPSPDGIQETYLASLAALGIKAADHDIRFVEDNWESPTLGAWGVGWEVWLDGMEVTQFTYFQQCGGIDCKPVSIEITYGLERLATYLQDVESIWDLSWNAERNYGDIWLPFEKGQCHFNFEGSDPERLKQLFAIYEAEASDLIEKKLPAPALDFVLKCSHTFNLLEARGVISVTERTATIGRIRTLARRVAEAWLAEREALGFPLLEGGTLPSAA.

Belongs to the class-II aminoacyl-tRNA synthetase family. Tetramer of two alpha and two beta subunits.

It localises to the cytoplasm. It carries out the reaction tRNA(Gly) + glycine + ATP = glycyl-tRNA(Gly) + AMP + diphosphate. The chain is Glycine--tRNA ligase alpha subunit from Parasynechococcus marenigrum (strain WH8102).